Reading from the N-terminus, the 116-residue chain is NADH-ubiquinone oxidoreductase chain 3 (116 aa).

A run of 3 helical transmembrane segments spans residues 3–23 (LITTIITITITLSAVLATISF), 56–76 (FFLIAILFLLFDLEIALLLPL), and 87–107 (LTLIWSTAVLALLTLGLIYEW).

This sequence belongs to the complex I subunit 3 family.

The protein resides in the mitochondrion membrane. The catalysed reaction is a ubiquinone + NADH + 5 H(+)(in) = a ubiquinol + NAD(+) + 4 H(+)(out). Its function is as follows. Core subunit of the mitochondrial membrane respiratory chain NADH dehydrogenase (Complex I) that is believed to belong to the minimal assembly required for catalysis. Complex I functions in the transfer of electrons from NADH to the respiratory chain. The immediate electron acceptor for the enzyme is believed to be ubiquinone. This chain is NADH-ubiquinone oxidoreductase chain 3 (MT-ND3), found in Oncorhynchus tshawytscha (Chinook salmon).